A 327-amino-acid polypeptide reads, in one-letter code: Ventral anterior homeobox 1 (327 aa).

The segment covering 1–34 (MFGKQDKMDVRCSTETEANRVSKNGHKEGKDSKG) has biased composition (basic and acidic residues). Positions 1 to 41 (MFGKQDKMDVRCSTETEANRVSKNGHKEGKDSKGAEGNIST) are disordered. Positions 99–158 (PKRTRTSFTAEQLYRLEMEFQRCQYVVGRERTELARQLNLSETQVKVWFQNRRTKQKKDQ) form a DNA-binding region, homeobox. Positions 230 to 245 (APAGGSPHPPSAGTAA) are enriched in low complexity. The segment at 230 to 249 (APAGGSPHPPSAGTAAGPPP) is disordered.

It belongs to the EMX homeobox family.

It localises to the nucleus. Its function is as follows. Transcription factor that plays a role in establishing dorsal-ventral polarity in the neural retina. This is Ventral anterior homeobox 1 (VAX1) from Gallus gallus (Chicken).